The primary structure comprises 134 residues: Putative pre-16S rRNA nuclease (134 aa).

The protein belongs to the YqgF nuclease family.

Its subcellular location is the cytoplasm. Could be a nuclease involved in processing of the 5'-end of pre-16S rRNA. The sequence is that of Putative pre-16S rRNA nuclease from Helicobacter pylori (strain J99 / ATCC 700824) (Campylobacter pylori J99).